The chain runs to 567 residues: Urease subunit alpha (567 aa).

A Urease domain is found at 128-567 (GGIDPHIHFI…LPLAQLYHLF (440 aa)). Ni(2+)-binding residues include His133, His135, and Lys216. Lys216 bears the N6-carboxylysine mark. His218 contacts substrate. Residues His245 and His271 each coordinate Ni(2+). Residue His319 is the Proton donor of the active site. Ni(2+) is bound at residue Asp359.

The protein belongs to the metallo-dependent hydrolases superfamily. Urease alpha subunit family. As to quaternary structure, heterotrimer of UreA (gamma), UreB (beta) and UreC (alpha) subunits. Three heterotrimers associate to form the active enzyme. It depends on Ni cation as a cofactor. Carboxylation allows a single lysine to coordinate two nickel ions.

It localises to the cytoplasm. The catalysed reaction is urea + 2 H2O + H(+) = hydrogencarbonate + 2 NH4(+). It participates in nitrogen metabolism; urea degradation; CO(2) and NH(3) from urea (urease route): step 1/1. The protein is Urease subunit alpha of Marinobacter nauticus (strain ATCC 700491 / DSM 11845 / VT8) (Marinobacter aquaeolei).